A 306-amino-acid chain; its full sequence is Protoheme IX farnesyltransferase (306 aa).

Helical transmembrane passes span 32–52 (VVQL…PGMP), 57–77 (WALM…AAAF), 108–128 (LLFS…WVNP), 129–149 (LTMW…TVIL), 157–177 (IVIG…AMTG), 183–203 (ALIL…ALAL), 230–250 (VFLY…YGMS), 252–272 (WIYL…GFRL), and 285–305 (FRFS…DHYL).

This sequence belongs to the UbiA prenyltransferase family. Protoheme IX farnesyltransferase subfamily.

It localises to the cell inner membrane. The catalysed reaction is heme b + (2E,6E)-farnesyl diphosphate + H2O = Fe(II)-heme o + diphosphate. It functions in the pathway porphyrin-containing compound metabolism; heme O biosynthesis; heme O from protoheme: step 1/1. Converts heme B (protoheme IX) to heme O by substitution of the vinyl group on carbon 2 of heme B porphyrin ring with a hydroxyethyl farnesyl side group. This Acidovorax ebreus (strain TPSY) (Diaphorobacter sp. (strain TPSY)) protein is Protoheme IX farnesyltransferase.